The chain runs to 181 residues: Peptide deformylase (181 aa).

Residues Cys-104 and His-146 each coordinate Fe cation. Glu-147 is an active-site residue. A Fe cation-binding site is contributed by His-150.

Belongs to the polypeptide deformylase family. Requires Fe(2+) as cofactor.

The catalysed reaction is N-terminal N-formyl-L-methionyl-[peptide] + H2O = N-terminal L-methionyl-[peptide] + formate. Its function is as follows. Removes the formyl group from the N-terminal Met of newly synthesized proteins. Requires at least a dipeptide for an efficient rate of reaction. N-terminal L-methionine is a prerequisite for activity but the enzyme has broad specificity at other positions. This is Peptide deformylase from Helicobacter hepaticus (strain ATCC 51449 / 3B1).